The following is a 142-amino-acid chain: Large ribosomal subunit protein bL19 (142 aa).

It belongs to the bacterial ribosomal protein bL19 family.

Its function is as follows. This protein is located at the 30S-50S ribosomal subunit interface and may play a role in the structure and function of the aminoacyl-tRNA binding site. The polypeptide is Large ribosomal subunit protein bL19 (Rickettsia bellii (strain OSU 85-389)).